Reading from the N-terminus, the 369-residue chain is Serine/threonine-protein phosphatase PP2A-1 catalytic subunit (369 aa).

The segment at 1–57 (MDTDLDVPMQDAVTEQLTPTVSEDMDLNNNSSDNNAEEFSVDDLKPGSSGIADHKSS) is disordered. 4 residues coordinate Mn(2+): aspartate 117, histidine 119, aspartate 145, and asparagine 177. Catalysis depends on histidine 178, which acts as the Proton donor. Residues histidine 227 and histidine 301 each coordinate Mn(2+). The disordered stretch occupies residues 348–369 (QYDPSVRPGEPSVSRKTPDYFL). Leucine 369 is modified (leucine methyl ester).

The protein belongs to the PPP phosphatase family. PP-2A subfamily. Inactivated in a complex with phosphatase methylesterase PPE1 (PP2Ai). Interacts with phosphatase 2A activator RRD2, which can reactivate PP2Ai by dissociating the catalytic subunit from the complex. Forms a ternary complex with RRD2-TAP42. It depends on Mn(2+) as a cofactor. In terms of processing, reversibly methyl esterified on Leu-369 by leucine carboxyl methyltransferase 1 (PPM1) and protein phosphatase methylesterase 1 (PPE1). Carboxyl methylation influences the affinity of the catalytic subunit for the different regulatory subunits, thereby modulating the PP2A holoenzyme's substrate specificity, enzyme activity and cellular localization.

The catalysed reaction is O-phospho-L-seryl-[protein] + H2O = L-seryl-[protein] + phosphate. It carries out the reaction O-phospho-L-threonyl-[protein] + H2O = L-threonyl-[protein] + phosphate. In terms of biological role, exact function not known, phosphatase 2A performs an essential cellular function. This is Serine/threonine-protein phosphatase PP2A-1 catalytic subunit (PPH21) from Saccharomyces cerevisiae (strain ATCC 204508 / S288c) (Baker's yeast).